Consider the following 145-residue polypeptide: Large ribosomal subunit protein uL15 (145 aa).

The interval 1–58 (MFSLLKPKGAAKRRKIVGRGPGSGLGKTSGRGQKGQKARNTSPRLGFEGGQTPLYRRL) is disordered. The span at 19-33 (RGPGSGLGKTSGRGQ) shows a compositional bias: gly residues.

Belongs to the universal ribosomal protein uL15 family. As to quaternary structure, part of the 50S ribosomal subunit.

Its function is as follows. Binds to the 23S rRNA. In Borreliella afzelii (strain PKo) (Borrelia afzelii), this protein is Large ribosomal subunit protein uL15.